The chain runs to 221 residues: Lipoprotein-releasing system ATP-binding protein LolD (221 aa).

One can recognise an ABC transporter domain in the interval 6-220; sequence LILKNISKHY…YKLKHRLLNI (215 aa). Residue 42–49 coordinates ATP; sequence GSSGSGKS.

This sequence belongs to the ABC transporter superfamily. Lipoprotein translocase (TC 3.A.1.125) family. The complex is composed of two ATP-binding proteins (LolD) and two transmembrane proteins (LolC and LolE).

The protein localises to the cell inner membrane. In terms of biological role, part of the ABC transporter complex LolCDE involved in the translocation of mature outer membrane-directed lipoproteins, from the inner membrane to the periplasmic chaperone, LolA. Responsible for the formation of the LolA-lipoprotein complex in an ATP-dependent manner. The chain is Lipoprotein-releasing system ATP-binding protein LolD from Rickettsia conorii (strain ATCC VR-613 / Malish 7).